Reading from the N-terminus, the 220-residue chain is UPF0319 protein Asuc_1002 (220 aa).

A signal peptide spans 1–21 (MKFRLAAVAAAALLASSASFA).

This sequence belongs to the UPF0319 family.

In Actinobacillus succinogenes (strain ATCC 55618 / DSM 22257 / CCUG 43843 / 130Z), this protein is UPF0319 protein Asuc_1002.